The sequence spans 137 residues: Large ribosomal subunit protein uL13 (137 aa).

Citrulline is present on Arg55. Ser73 carries the phosphoserine modification. Arg136 carries the citrulline modification.

This sequence belongs to the universal ribosomal protein uL13 family. Component of the 60S ribosome. Component of the GAIT complex. Interacts with EIF4G1. In terms of processing, phosphorylation at Ser-73 upon interferon-gamma treatment in macrophages involves a DAPK1-DAPK3 kinase cascade and is causing release from the ribosome, association with the GAIT complex and subsequent involvement in transcript-selective translation inhibition. Citrullinated by PADI4.

It localises to the cytoplasm. Associated with ribosomes but is not required for canonical ribosome function and has extra-ribosomal functions. Component of the GAIT (gamma interferon-activated inhibitor of translation) complex which mediates interferon-gamma-induced transcript-selective translation inhibition in inflammation processes. Upon interferon-gamma activation and subsequent phosphorylation dissociates from the ribosome and assembles into the GAIT complex which binds to stem loop-containing GAIT elements in the 3'-UTR of diverse inflammatory mRNAs (such as ceruplasmin) and suppresses their translation. In the GAIT complex interacts with m7G cap-bound eIF4G at or near the eIF3-binding site and blocks the recruitment of the 43S ribosomal complex. Involved in methylation of rRNA. The polypeptide is Large ribosomal subunit protein uL13 (RPL13A) (Sus scrofa (Pig)).